We begin with the raw amino-acid sequence, 214 residues long: Uridine kinase (214 aa).

15–22 is an ATP binding site; that stretch reads GASASGKS.

The protein belongs to the uridine kinase family.

The protein resides in the cytoplasm. It catalyses the reaction uridine + ATP = UMP + ADP + H(+). The enzyme catalyses cytidine + ATP = CMP + ADP + H(+). It functions in the pathway pyrimidine metabolism; CTP biosynthesis via salvage pathway; CTP from cytidine: step 1/3. Its pathway is pyrimidine metabolism; UMP biosynthesis via salvage pathway; UMP from uridine: step 1/1. The protein is Uridine kinase of Aeromonas hydrophila subsp. hydrophila (strain ATCC 7966 / DSM 30187 / BCRC 13018 / CCUG 14551 / JCM 1027 / KCTC 2358 / NCIMB 9240 / NCTC 8049).